The sequence spans 275 residues: NH(3)-dependent NAD(+) synthetase (275 aa).

Residue 46–53 (GISGGQDS) coordinates ATP. Asp-52 contacts Mg(2+). Arg-140 is a deamido-NAD(+) binding site. Thr-160 is a binding site for ATP. Glu-165 contacts Mg(2+). 2 residues coordinate deamido-NAD(+): Lys-173 and Asp-180. Lys-189 and Thr-211 together coordinate ATP. Deamido-NAD(+) is bound at residue 260 to 261 (HK).

This sequence belongs to the NAD synthetase family. Homodimer.

It carries out the reaction deamido-NAD(+) + NH4(+) + ATP = AMP + diphosphate + NAD(+) + H(+). It functions in the pathway cofactor biosynthesis; NAD(+) biosynthesis; NAD(+) from deamido-NAD(+) (ammonia route): step 1/1. In terms of biological role, catalyzes the ATP-dependent amidation of deamido-NAD to form NAD. Uses ammonia as a nitrogen source. The protein is NH(3)-dependent NAD(+) synthetase of Escherichia coli O6:K15:H31 (strain 536 / UPEC).